Consider the following 520-residue polypeptide: N-acetylgalactosamine-6-sulfatase (520 aa).

The signal sequence occupies residues Met1 to Gly23. The interval Ala24–Asp377 is catalytic domain. Ca(2+)-binding residues include Asp36, Asp37, and Cys76. The active-site Nucleophile is Cys76. Cys76 carries the post-translational modification 3-oxoalanine (Cys). Residue His139 is part of the active site. Asn201 carries an N-linked (GlcNAc...) asparagine glycan. Ca(2+) contacts are provided by Asp286 and Asn287. A disulfide bridge connects residues Cys306 and Cys417. N-linked (GlcNAc...) asparagine glycosylation occurs at Asn421. 2 cysteine pairs are disulfide-bonded: Cys487–Cys516 and Cys499–Cys505.

The protein belongs to the sulfatase family. As to quaternary structure, homodimer. Ca(2+) is required as a cofactor. Post-translationally, the conversion to 3-oxoalanine (also known as C-formylglycine, FGly), of a serine or cysteine residue in prokaryotes and of a cysteine residue in eukaryotes, is critical for catalytic activity. As to expression, widely expressed. Higher expression in liver and kidney.

Its subcellular location is the lysosome. It carries out the reaction Hydrolysis of the 6-sulfate groups of the N-acetyl-D-galactosamine 6-sulfate units of chondroitin sulfate and of the D-galactose 6-sulfate units of keratan sulfate.. This chain is N-acetylgalactosamine-6-sulfatase (Galns), found in Mus musculus (Mouse).